The primary structure comprises 331 residues: Biotin synthase (331 aa).

A Radical SAM core domain is found at 52–281 (FFQNKVKLNM…TKEIRVSGGR (230 aa)). [4Fe-4S] cluster is bound by residues Cys-70, Cys-74, and Cys-77. [2Fe-2S] cluster is bound by residues Cys-114, Cys-146, Cys-206, and Arg-276.

This sequence belongs to the radical SAM superfamily. Biotin synthase family. As to quaternary structure, homodimer. The cofactor is [4Fe-4S] cluster. It depends on [2Fe-2S] cluster as a cofactor.

It carries out the reaction (4R,5S)-dethiobiotin + (sulfur carrier)-SH + 2 reduced [2Fe-2S]-[ferredoxin] + 2 S-adenosyl-L-methionine = (sulfur carrier)-H + biotin + 2 5'-deoxyadenosine + 2 L-methionine + 2 oxidized [2Fe-2S]-[ferredoxin]. It functions in the pathway cofactor biosynthesis; biotin biosynthesis; biotin from 7,8-diaminononanoate: step 2/2. Its function is as follows. Catalyzes the conversion of dethiobiotin (DTB) to biotin by the insertion of a sulfur atom into dethiobiotin via a radical-based mechanism. This is Biotin synthase from Bacillus pumilus (strain SAFR-032).